The sequence spans 413 residues: uncharacterized protein (413 aa).

Helical transmembrane passes span V22–L42, I270–C290, I312–I332, and L379–Y399.

This sequence belongs to the ABC-4 integral membrane protein family. LolC/E subfamily.

Its subcellular location is the cell membrane. This is an uncharacterized protein from Buchnera aphidicola subsp. Schizaphis graminum (strain Sg).